The sequence spans 396 residues: Succinyl-CoA:mesaconate CoA-transferase (396 aa).

Asp175 functions as the Nucleophile in the catalytic mechanism.

This sequence belongs to the CoA-transferase III family. As to quaternary structure, homodimer.

The catalysed reaction is mesaconate + succinyl-CoA = 2-methylfumaryl-CoA + succinate. Shows highest activity at 4 M KCl. Does not require divalent ions for activity. Its function is as follows. Involved in the methylaspartate cycle. Catalyzes the transfer of the CoA moiety from succinyl-CoA to mesaconate to generate mesaconyl-CoA (2-methylfumaryl-CoA) and succinate. Also shows high activity with methylsuccinate as CoA-acceptor, and only low activity with glutarate, acrylate and itaconate. Cannot use other CoA donors like acetyl-CoA, propionyl-CoA, butyryl-CoA or acetoacetyl-CoA. The protein is Succinyl-CoA:mesaconate CoA-transferase of Haloarcula hispanica (strain ATCC 33960 / DSM 4426 / JCM 8911 / NBRC 102182 / NCIMB 2187 / VKM B-1755).